The following is a 715-amino-acid chain: Epidermal growth factor receptor kinase substrate 8-like protein 2 (715 aa).

The region spanning methionine 46–proline 202 is the PID domain. Residues glutamine 183–glutamate 243 are disordered. Residues leucine 199 to isoleucine 208 show a composition bias toward pro residues. 2 stretches are compositionally biased toward basic and acidic residues: residues arginine 213 to asparagine 222 and glycine 234 to glutamate 243. Position 240 is a phosphoserine (serine 240). Threonine 303 is modified (phosphothreonine). Residues valine 448–tyrosine 487 form a disordered region. The residue at position 449 (serine 449) is a Phosphoserine. Residues valine 451–serine 466 show a composition bias toward polar residues. Threonine 469 carries the phosphothreonine modification. The SH3 domain occupies alanine 492–proline 551. The residue at position 570 (serine 570) is a Phosphoserine.

Belongs to the EPS8 family. As to quaternary structure, interacts with ABI1. Part of a complex that contains SOS1, ABI1 and EPS8L2. Associates with F-actin. Detected in fibroblasts and placenta.

Its subcellular location is the cytoplasm. The protein localises to the cell projection. It is found in the stereocilium. In terms of biological role, stimulates guanine exchange activity of SOS1. May play a role in membrane ruffling and remodeling of the actin cytoskeleton. In the cochlea, is required for stereocilia maintenance in adult hair cells. The chain is Epidermal growth factor receptor kinase substrate 8-like protein 2 (EPS8L2) from Homo sapiens (Human).